The chain runs to 334 residues: Aspartate carbamoyltransferase catalytic subunit (334 aa).

The carbamoyl phosphate site is built by Arg70 and Thr71. Lys98 is an L-aspartate binding site. Positions 120, 150, and 153 each coordinate carbamoyl phosphate. L-aspartate-binding residues include Arg183 and Arg239. Residues Gly280 and Pro281 each contribute to the carbamoyl phosphate site.

It belongs to the aspartate/ornithine carbamoyltransferase superfamily. ATCase family. As to quaternary structure, heterododecamer (2C3:3R2) of six catalytic PyrB chains organized as two trimers (C3), and six regulatory PyrI chains organized as three dimers (R2).

It catalyses the reaction carbamoyl phosphate + L-aspartate = N-carbamoyl-L-aspartate + phosphate + H(+). It participates in pyrimidine metabolism; UMP biosynthesis via de novo pathway; (S)-dihydroorotate from bicarbonate: step 2/3. Its function is as follows. Catalyzes the condensation of carbamoyl phosphate and aspartate to form carbamoyl aspartate and inorganic phosphate, the committed step in the de novo pyrimidine nucleotide biosynthesis pathway. The protein is Aspartate carbamoyltransferase catalytic subunit of Pseudomonas paraeruginosa (strain DSM 24068 / PA7) (Pseudomonas aeruginosa (strain PA7)).